Consider the following 352-residue polypeptide: SNF1-related protein kinase regulatory subunit gamma-like PV42a (352 aa).

CBS domains lie at 24–106, 122–196, 210–281, and 297–352; these read RNRR…LSDL, LEGL…FDDL, VNDS…ELQT, and KERE…STLS.

Belongs to the 5'-AMP-activated protein kinase gamma subunit family. In terms of tissue distribution, expressed highly in rosette leaves, cauline leaves, open flowers, developing siliques and dry seeds, but at a low level in stems and floral buds.

Functionally, plays redundant role with PV42b in regulating male gametogenesis and pollen tube guidance. The protein is SNF1-related protein kinase regulatory subunit gamma-like PV42a (PV42A) of Arabidopsis thaliana (Mouse-ear cress).